The chain runs to 114 residues: Large ribosomal subunit protein bL20 (114 aa).

It belongs to the bacterial ribosomal protein bL20 family.

Functionally, binds directly to 23S ribosomal RNA and is necessary for the in vitro assembly process of the 50S ribosomal subunit. It is not involved in the protein synthesizing functions of that subunit. This Parabacteroides distasonis (strain ATCC 8503 / DSM 20701 / CIP 104284 / JCM 5825 / NCTC 11152) protein is Large ribosomal subunit protein bL20.